The following is a 457-amino-acid chain: 6-phosphofructo-2-kinase/fructose-2,6-bisphosphatase (457 aa).

Residues 1 to 20 (MEIPPGLETTKRKVAHSDEH) are disordered. A 6-phosphofructo-2-kinase region spans residues 1-244 (MEIPPGLETT…VYFLMNIHLL (244 aa)). Over residues 9-20 (TTKRKVAHSDEH) the composition is skewed to basic and acidic residues. Residue 36-44 (GLPARGKTY) participates in ATP binding. Beta-D-fructose 6-phosphate is bound by residues Arg69 and Arg98. The active site involves Asp124. Thr126 and Arg132 together coordinate beta-D-fructose 6-phosphate. Cys154 is an active-site residue. 163-168 (NVTDVK) contacts ATP. Residues Lys168, Arg190, and Tyr194 each contribute to the beta-D-fructose 6-phosphate site. A fructose-2,6-bisphosphatase region spans residues 245–457 (PRSIYLTRHG…QLPLCDSPRD (213 aa)). Beta-D-fructose 2,6-bisphosphate is bound at residue Arg252. His253 acts as the Tele-phosphohistidine intermediate in catalysis. Beta-D-fructose 2,6-bisphosphate contacts are provided by Asn259 and Gly265. Residue Glu324 is the Proton donor/acceptor of the active site. Beta-D-fructose 2,6-bisphosphate contacts are provided by Tyr335, Arg349, Lys353, Tyr364, Gln390, and Arg394. 346 to 349 (ADDR) contributes to the ATP binding site. ATP-binding positions include 390 to 394 (QAVLR) and Tyr426.

The protein in the C-terminal section; belongs to the phosphoglycerate mutase family.

The enzyme catalyses beta-D-fructose 2,6-bisphosphate + H2O = beta-D-fructose 6-phosphate + phosphate. It catalyses the reaction beta-D-fructose 6-phosphate + ATP = beta-D-fructose 2,6-bisphosphate + ADP + H(+). Its function is as follows. Synthesis and degradation of fructose 2,6-bisphosphate. In Caenorhabditis elegans, this protein is 6-phosphofructo-2-kinase/fructose-2,6-bisphosphatase.